A 512-amino-acid chain; its full sequence is Bifunctional purine biosynthesis protein PurH (512 aa).

Residues 1 to 146 form the MGS-like domain; it reads MTIKRALISV…KNHQDVTVIV (146 aa).

This sequence belongs to the PurH family.

The catalysed reaction is (6R)-10-formyltetrahydrofolate + 5-amino-1-(5-phospho-beta-D-ribosyl)imidazole-4-carboxamide = 5-formamido-1-(5-phospho-D-ribosyl)imidazole-4-carboxamide + (6S)-5,6,7,8-tetrahydrofolate. It catalyses the reaction IMP + H2O = 5-formamido-1-(5-phospho-D-ribosyl)imidazole-4-carboxamide. The protein operates within purine metabolism; IMP biosynthesis via de novo pathway; 5-formamido-1-(5-phospho-D-ribosyl)imidazole-4-carboxamide from 5-amino-1-(5-phospho-D-ribosyl)imidazole-4-carboxamide (10-formyl THF route): step 1/1. It functions in the pathway purine metabolism; IMP biosynthesis via de novo pathway; IMP from 5-formamido-1-(5-phospho-D-ribosyl)imidazole-4-carboxamide: step 1/1. The sequence is that of Bifunctional purine biosynthesis protein PurH from Bacillus subtilis (strain 168).